Reading from the N-terminus, the 309-residue chain is MELQFLGTGAGQPAKHRNVSSLVLKLLDEINEVWMFDCGEGTQRQILETTIKPRKIKKIFITHLHGDHIFGLPGFLSSRAFQASEEQTDLEIYGPVGIKSYVTNSIRISGSKLPYQIHYHEFDDTSMGKILETDKFIVYAERLAHTIFCMGYRVVQKDLEGTLDAEALRAAGVPFGPLFGKVKNGQDIELEDGTKIFAKDFISEPRKGKIITIIGDTRKTSASVRLAKDADVLVHESTYGKGDERMARNHGHSTNMQAAQIARDAGAKRLLLNHVSARFLGRDCRQMEKDAATIFENVKVVRDLEEVII.

7 residues coordinate Zn(2+): His-63, His-65, Asp-67, His-68, His-145, Asp-216, and His-274. Asp-67 serves as the catalytic Proton acceptor.

The protein belongs to the RNase Z family. As to quaternary structure, homodimer. Zn(2+) serves as cofactor.

The enzyme catalyses Endonucleolytic cleavage of RNA, removing extra 3' nucleotides from tRNA precursor, generating 3' termini of tRNAs. A 3'-hydroxy group is left at the tRNA terminus and a 5'-phosphoryl group is left at the trailer molecule.. In terms of biological role, zinc phosphodiesterase, which displays some tRNA 3'-processing endonuclease activity. Probably involved in tRNA maturation, by removing a 3'-trailer from precursor tRNA. The chain is Ribonuclease Z from Streptococcus equi subsp. zooepidemicus (strain H70).